The chain runs to 99 residues: MALTKADIAEHLFEKLGINKKDAKDLVEAFFEEIRSALEKGEQIKLSGFGNFDLRDKKERPGRNPKTGEDIPISARRVVTFRPGQKLKTRVEVGTSKAK.

Belongs to the bacterial histone-like protein family. In terms of assembly, heterodimer of an alpha and a beta chain.

This protein is one of the two subunits of integration host factor, a specific DNA-binding protein that functions in genetic recombination as well as in transcriptional and translational control. This is Integration host factor subunit alpha from Pseudoalteromonas translucida (strain TAC 125).